The primary structure comprises 288 residues: Geranylgeranyl diphosphate synthase (288 aa).

Isopentenyl diphosphate contacts are provided by R43 and H73. The Mg(2+) site is built by D80 and D86. R91 is a binding site for (2E,6E)-farnesyl diphosphate. R92 contributes to the isopentenyl diphosphate binding site. Residues K170, T171, and Q205 each coordinate (2E,6E)-farnesyl diphosphate.

The protein belongs to the FPP/GGPP synthase family. Mg(2+) serves as cofactor.

It catalyses the reaction isopentenyl diphosphate + (2E,6E)-farnesyl diphosphate = (2E,6E,10E)-geranylgeranyl diphosphate + diphosphate. It participates in isoprenoid biosynthesis; geranylgeranyl diphosphate biosynthesis; geranylgeranyl diphosphate from farnesyl diphosphate and isopentenyl diphosphate: step 1/1. Functionally, catalyzes the condensation of farnesyl diphosphate (FPP) and isopentenyl diphosphate (IPP) to yield geranylgeranyl diphosphate (GGPP) needed for biosynthesis of carotenoids and diterpenes. The protein is Geranylgeranyl diphosphate synthase (crtE) of Cereibacter sphaeroides (strain ATCC 17023 / DSM 158 / JCM 6121 / CCUG 31486 / LMG 2827 / NBRC 12203 / NCIMB 8253 / ATH 2.4.1.) (Rhodobacter sphaeroides).